Reading from the N-terminus, the 349-residue chain is Lachesin (349 aa).

The first 18 residues, 1–18 (MDLRLYTIFVGFFSVVYA), serve as a signal peptide directing secretion. One can recognise an Ig-like V-type domain in the interval 22 to 127 (PTISYISQEQ…NKITAEVDLQ (106 aa)). A disulfide bridge connects residues Cys43 and Cys110. 2 Ig-like C2-type domains span residues 132-218 (PVIS…IAVE) and 222-315 (PPVI…VELF). Asn137 carries N-linked (GlcNAc...) asparagine glycosylation. 2 disulfide bridges follow: Cys154–Cys201 and Cys244–Cys299. Gly332 carries the GPI-anchor amidated glycine lipid modification. Positions 333-349 (DAAEISTSMALILISTI) are cleaved as a propeptide — removed in mature form.

The N-terminus is blocked. As to expression, expressed by all neurogenic cells early, but only those cells that become neuroblasts continue to express it. Expressed by neuroblasts, ganglion mother cells and neurons early in their lives, but expression becomes restricted to a subset of neurons as development progresses. Expressed by sensory neurons as they delaminate from the body wall ectoderm. It is also present on growing axons of the CNS and PNS and becomes restricted to a subset of axons later in development.

Its subcellular location is the cell membrane. May play a role in early neuronal differentiation and axon outgrowth. In Schistocerca americana (American grasshopper), this protein is Lachesin (LAC).